A 264-amino-acid polypeptide reads, in one-letter code: Thymidylate synthase (264 aa).

Arg21 contributes to the dUMP binding site. A (6R)-5,10-methylene-5,6,7,8-tetrahydrofolate-binding site is contributed by His51. 126 to 127 (RR) is a dUMP binding site. The active-site Nucleophile is the Cys146. DUMP-binding positions include 166-169 (RSCD), Asn177, and 207-209 (HLY). Asp169 lines the (6R)-5,10-methylene-5,6,7,8-tetrahydrofolate pocket. A (6R)-5,10-methylene-5,6,7,8-tetrahydrofolate-binding site is contributed by Ala263.

The protein belongs to the thymidylate synthase family. Bacterial-type ThyA subfamily. In terms of assembly, homodimer.

It is found in the cytoplasm. The catalysed reaction is dUMP + (6R)-5,10-methylene-5,6,7,8-tetrahydrofolate = 7,8-dihydrofolate + dTMP. It functions in the pathway pyrimidine metabolism; dTTP biosynthesis. Its function is as follows. Catalyzes the reductive methylation of 2'-deoxyuridine-5'-monophosphate (dUMP) to 2'-deoxythymidine-5'-monophosphate (dTMP) while utilizing 5,10-methylenetetrahydrofolate (mTHF) as the methyl donor and reductant in the reaction, yielding dihydrofolate (DHF) as a by-product. This enzymatic reaction provides an intracellular de novo source of dTMP, an essential precursor for DNA biosynthesis. In Serratia proteamaculans (strain 568), this protein is Thymidylate synthase.